Consider the following 386-residue polypeptide: ADP,ATP carrier protein, mitochondrial (386 aa).

The transit peptide at Met1–Ala77 directs the protein to the mitochondrion. Solcar repeat units lie at residues Ala84–Leu177, Lys189–Val281, and Asp289–Leu375. The next 5 membrane-spanning stretches (helical) occupy residues Phe86–Leu113, Thr154–Phe178, Tyr187–Phe207, Phe257–Leu278, and Phe292–Ile312. Positions 159 and 171 each coordinate ADP. Arg316 contributes to the ADP binding site. The important for transport activity stretch occupies residues Arg316–Met321. The short motif at Arg316–Met321 is the Nucleotide carrier signature motif element. The helical transmembrane segment at Ala352–Leu372 threads the bilayer.

Belongs to the mitochondrial carrier (TC 2.A.29) family. In terms of assembly, monomer.

Its subcellular location is the mitochondrion inner membrane. It carries out the reaction ADP(in) + ATP(out) = ADP(out) + ATP(in). The matrix-open state (m-state) is inhibited by the membrane-permeable bongkrekic acid (BKA). The cytoplasmic-open state (c-state) is inhibited by the membrane-impermeable toxic inhibitor carboxyatractyloside (CATR). In terms of biological role, ADP:ATP antiporter that mediates import of ADP into the mitochondrial matrix for ATP synthesis, and export of ATP out to fuel the cell. Cycles between the cytoplasmic-open state (c-state) and the matrix-open state (m-state): operates by the alternating access mechanism with a single substrate-binding site intermittently exposed to either the cytosolic (c-state) or matrix (m-state) side of the inner mitochondrial membrane. The chain is ADP,ATP carrier protein, mitochondrial (ANT) from Solanum tuberosum (Potato).